Here is a 156-residue protein sequence, read N- to C-terminus: Cyanate hydratase (156 aa).

Residues R96, E99, and S122 contribute to the active site.

It belongs to the cyanase family.

The catalysed reaction is cyanate + hydrogencarbonate + 3 H(+) = NH4(+) + 2 CO2. Functionally, catalyzes the reaction of cyanate with bicarbonate to produce ammonia and carbon dioxide. This Pseudomonas aeruginosa (strain UCBPP-PA14) protein is Cyanate hydratase.